Here is an 84-residue protein sequence, read N- to C-terminus: Large ribosomal subunit protein bL31B (84 aa).

It belongs to the bacterial ribosomal protein bL31 family. Type B subfamily. As to quaternary structure, part of the 50S ribosomal subunit.

The polypeptide is Large ribosomal subunit protein bL31B (Photorhabdus laumondii subsp. laumondii (strain DSM 15139 / CIP 105565 / TT01) (Photorhabdus luminescens subsp. laumondii)).